The chain runs to 227 residues: ATP-dependent Clp protease proteolytic subunit 1 (227 aa).

Residue serine 124 is the Nucleophile of the active site. Histidine 149 is a catalytic residue.

It belongs to the peptidase S14 family. In terms of assembly, fourteen ClpP subunits assemble into 2 heptameric rings which stack back to back to give a disk-like structure with a central cavity, resembling the structure of eukaryotic proteasomes.

The protein resides in the cytoplasm. The enzyme catalyses Hydrolysis of proteins to small peptides in the presence of ATP and magnesium. alpha-casein is the usual test substrate. In the absence of ATP, only oligopeptides shorter than five residues are hydrolyzed (such as succinyl-Leu-Tyr-|-NHMec, and Leu-Tyr-Leu-|-Tyr-Trp, in which cleavage of the -Tyr-|-Leu- and -Tyr-|-Trp bonds also occurs).. Its function is as follows. Cleaves peptides in various proteins in a process that requires ATP hydrolysis. Has a chymotrypsin-like activity. Plays a major role in the degradation of misfolded proteins. This Rhodopirellula baltica (strain DSM 10527 / NCIMB 13988 / SH1) protein is ATP-dependent Clp protease proteolytic subunit 1.